Here is a 32-residue protein sequence, read N- to C-terminus: Peptide tarsal-less AA (32 aa).

The segment at 1-32 (MLDPTGTYRRPRDTQDSRQKRRQDCLDPTGQY) is disordered. Repeat 1 spans residues 2 to 8 (LDPTGTY). Residues 2–32 (LDPTGTYRRPRDTQDSRQKRRQDCLDPTGQY) are 2 X 7 AA repeats of L-D-P-T-G-[TQ]-Y. The segment covering 10 to 25 (RPRDTQDSRQKRRQDC) has biased composition (basic and acidic residues). Residues 26–32 (LDPTGQY) form repeat 2.

It localises to the cytoplasm. Its subcellular location is the nucleus. In terms of biological role, one of four peptides (tal-1A, tal-2A, tal-3A and tal-AA) produced from a polycistronic gene that function redundantly in several developmental processes. Required in early stages of leg development for the intercalation of the tarsal segments during the mid-third instar stage and later for tarsal joint formation. Promotes the post-translational modification of ovo isoform B (svb) into its active form which in turn initiates trichome development and promotes tarsal joint development. This is likely due to recruitment of the E3 ubiquitin-protein ligase Ubr3 to svb for ubiquitination of its N-terminus, converting svb into a transcriptional activator. Also enhances interaction of Ubr3 with Diap1. Required for correct wing and leg formation through its regulation of several genes including those in the Notch signaling pathway. Essential for denticle formation and may have a role in the developmental timing of trichome differentiation. Essential for the development of taenidial folds in the trachea. This is Peptide tarsal-less AA from Drosophila melanogaster (Fruit fly).